The following is a 671-amino-acid chain: Protein KHNYN (671 aa).

4 disordered regions span residues 234–274 (RVAG…LSGE), 294–327 (EVAP…AHVP), 344–402 (HNGS…GGNL), and 577–626 (GPTL…RKTR). Positions 250-272 (TVEKEERKQDAVRDMGSGRKELS) are enriched in basic and acidic residues. Residues 351–365 (PRVPSPPPAPEPPWP) are compositionally biased toward pro residues. Phosphoserine is present on serine 355. Residues 367 to 381 (GDRDRDRDRGDRGDK) show a composition bias toward basic and acidic residues. The 153-residue stretch at 430–582 (LRHIVIDGSN…LGRNGPTLDE (153 aa)) folds into the RNase NYN domain. The segment covering 591–612 (QGSSKTQQPSKGSTEQANQQQG) has biased composition (polar residues).

Belongs to the N4BP1 family.

In Mus musculus (Mouse), this protein is Protein KHNYN (Khnyn).